The following is a 190-amino-acid chain: Selenoprotein S (190 aa).

Residues Ser-28–Ile-48 traverse the membrane as a helical segment. The segment at Arg-78 to Gln-90 is VCP/p97-interacting motif (VIM). A disordered region spans residues Lys-115 to Asn-190. The span at Arg-160–Thr-174 shows a compositional bias: gly residues. Residue Sec-189 is a non-standard amino acid, selenocysteine.

The protein belongs to the selenoprotein S family. As to quaternary structure, interacts with DERL1 and (via VIM motif) with VCP, suggesting that it forms a membrane complex with DERL1 that serves as a receptor for VCP. Also interacts with DERL2, DERL3 and SELENOK. The SELENOK-SELENOS complex interacts with VCP. Interacts with CCDC47. Truncated SELENOS proteins produced by failed UGA/Sec decoding are ubiquitinated by the CRL2(KLHDC2) and CRL2(KLHDC3) complexes, which recognizes the glycine (Gly) at the C-terminus of truncated SELENOS proteins. Truncated SELENOS proteins produced by failed UGA/Sec decoding are also ubiquitinated by the CRL5(KLHDC1) complex.

It localises to the endoplasmic reticulum membrane. Its subcellular location is the cytoplasm. Involved in the degradation process of misfolded endoplasmic reticulum (ER) luminal proteins. Participates in the transfer of misfolded proteins from the ER to the cytosol, where they are destroyed by the proteasome in a ubiquitin-dependent manner. Probably acts by serving as a linker between DERL1, which mediates the retrotranslocation of misfolded proteins into the cytosol, and the ATPase complex VCP, which mediates the translocation and ubiquitination. The chain is Selenoprotein S from Mus musculus (Mouse).